An 86-amino-acid chain; its full sequence is Small ribosomal subunit protein bS20 (86 aa).

Residues 1-11 are compositionally biased toward basic residues; the sequence is MANIKQQKKRN. The segment at 1–20 is disordered; it reads MANIKQQKKRNKTNEKRRLQ.

This sequence belongs to the bacterial ribosomal protein bS20 family.

Functionally, binds directly to 16S ribosomal RNA. The sequence is that of Small ribosomal subunit protein bS20 from Aster yellows witches'-broom phytoplasma (strain AYWB).